The following is a 115-amino-acid chain: Holo-[acyl-carrier-protein] synthase (115 aa).

D5 and E50 together coordinate Mg(2+).

It belongs to the P-Pant transferase superfamily. AcpS family. It depends on Mg(2+) as a cofactor.

It is found in the cytoplasm. The enzyme catalyses apo-[ACP] + CoA = holo-[ACP] + adenosine 3',5'-bisphosphate + H(+). Functionally, transfers the 4'-phosphopantetheine moiety from coenzyme A to a Ser of acyl-carrier-protein. In Campylobacter fetus subsp. fetus (strain 82-40), this protein is Holo-[acyl-carrier-protein] synthase.